Reading from the N-terminus, the 387-residue chain is Cytochrome b (387 aa).

The chain crosses the membrane as a helical span at residues 32–52; it reads LGSLLGLCLVIQIASGVFLAM. H82 and H96 together coordinate heme b. The next 8 helical transmembrane spans lie at 85 to 105, 116 to 136, 151 to 171, 179 to 199, 225 to 245, 289 to 309, 324 to 344, and 350 to 370; these read GASFFFICMYLHIGKALYYGS, IGVVIFILTMAIAFMGYCLVY, LSAIPFIGNDIVPFIWGGFSV, FFALHFLLPFILAALVCMHLM, FIFKDLITVFVFLLIFSLFVF, LGGVIAMFGAILILLSLPYTD, LAFYLFVFNFILLGNLGQLHV, and QLGQFATAYYFAHYIIVVPVI. Positions 183 and 197 each coordinate heme b.

This sequence belongs to the cytochrome b family. As to quaternary structure, component of the ubiquinol-cytochrome c oxidoreductase (cytochrome b-c1 complex, complex III, CIII), a multisubunit enzyme composed of 10 subunits. The complex is composed of 3 respiratory subunits cytochrome b (COB), cytochrome c1 (CYT1) and Rieske protein (RIP1), 2 core protein subunits COR1 and QCR2, and 5 low-molecular weight protein subunits QCR6, QCR7, QCR8, QCR9 and QCR10. The complex exists as an obligatory dimer and forms supercomplexes (SCs) in the inner mitochondrial membrane with a monomer or a dimer of cytochrome c oxidase (complex IV, CIV), resulting in 2 different assemblies (supercomplexes III(2)IV and III(2)IV(2)). Heme b serves as cofactor.

Its subcellular location is the mitochondrion inner membrane. Functionally, component of the ubiquinol-cytochrome c oxidoreductase, a multisubunit transmembrane complex that is part of the mitochondrial electron transport chain which drives oxidative phosphorylation. The complex plays an important role in the uptake of multiple carbon sources present in different host niches. This chain is Cytochrome b, found in Candida albicans (strain SC5314 / ATCC MYA-2876) (Yeast).